Here is a 1050-residue protein sequence, read N- to C-terminus: Valine--tRNA ligase (1050 aa).

Positions E37–T57 are enriched in basic and acidic residues. The tract at residues E37–R72 is disordered. The 'HIGH' region signature appears at P127 to H137. Positions K642 to S646 match the 'KMSKS' region motif. Residue K645 participates in ATP binding.

The protein belongs to the class-I aminoacyl-tRNA synthetase family.

The enzyme catalyses tRNA(Val) + L-valine + ATP = L-valyl-tRNA(Val) + AMP + diphosphate. This is Valine--tRNA ligase from Caenorhabditis elegans.